Here is a 335-residue protein sequence, read N- to C-terminus: Leukocyte immunoglobulin-like receptor subfamily B member 4A (335 aa).

A signal peptide spans 1-23 (MIAMLTVLLYLGLILEPRTAVQA). Residues 24–238 (GHLPKPIIWA…TEDGLETYQK (215 aa)) are Extracellular-facing. 2 consecutive Ig-like C2-type domains span residues 42 to 125 (YTSV…ENPS) and 124 to 212 (PSLS…KPSN). Residues C49 and C98 are joined by a disulfide bond. 2 N-linked (GlcNAc...) asparagine glycosylation sites follow: N133 and N191. A disulfide bridge links C144 with C196. A helical transmembrane segment spans residues 239–260 (ILIGVLVSFLLLFFLLLFLILI). The Cytoplasmic segment spans residues 261 to 335 (GYQYGHKKKA…CIRTQEQNNS (75 aa)). Short sequence motifs (ITIM motif) lie at residues 298–303 (IVYAQV) and 320–325 (VTYAQL).

Interacts (when tyrosine phosphorylated) with SH2 domain-containing phosphatases PTPN6/SHP-1 and PTPN11/SHP-2; interaction with PTPN6 enhances inhibition of mast cell activation. Post-translationally, tyrosine phosphorylated. In terms of tissue distribution, expressed on mast cells and natural killer cells (at protein level). Expressed on neutrophils (at protein level). Expressed on eosinophils (at protein level). Expressed on dendritic cells (at protein level). Expressed on memory and marginal zone B cells (at protein level). Expressed on CD8 T cells (at protein level). Expressed in the uterus of pregnant mice where it is detected at day 4.0 of pregnancy with levels dropping at day 4.5. Highly expressed in the luminal epithelium of uterine endometrium with lower levels in the glandular epithelium.

It localises to the cell membrane. Functionally, inhibitory receptor involved in the down-regulation of the immune response. Receptor for FN1. Receptor for integrin ITGAV/ITGB3. Inhibits IgE-mediated mast cell activation, at least in part through interaction with ITGAV/ITGB3. Also inhibits KITLG/SCF-mediated mast cell activation. Through interaction with ITGAV/ITGB3, inhibits antibody production by memory and marginal zone B cells, probably by suppressing their differentiation into plasma cells. Inhibits IFNG production by CD8 T cells, CD4 T cells and natural killer cells. Inhibits antigen presentation by dendritic cells to T cells, preventing T cell activation. Inhibits lipopolysaccharide-mediated neutrophil-dependent vascular injury. Suppresses the allergic inflammatory response by inhibiting infiltration of neutrophils and eosinophils and preventing mast cell degranulation. Inhibits lysis by natural killer cells. This chain is Leukocyte immunoglobulin-like receptor subfamily B member 4A, found in Mus musculus (Mouse).